Reading from the N-terminus, the 344-residue chain is Methionine import ATP-binding protein MetN 1 (344 aa).

In terms of domain architecture, ABC transporter spans 2 to 241 (IELRNLSQRF…PHHEVTRALI (240 aa)). 38–45 (GRSGAGKS) contacts ATP.

The protein belongs to the ABC transporter superfamily. Methionine importer (TC 3.A.1.24) family. As to quaternary structure, the complex is composed of two ATP-binding proteins (MetN), two transmembrane proteins (MetI) and a solute-binding protein (MetQ).

Its subcellular location is the cell inner membrane. It catalyses the reaction L-methionine(out) + ATP + H2O = L-methionine(in) + ADP + phosphate + H(+). The catalysed reaction is D-methionine(out) + ATP + H2O = D-methionine(in) + ADP + phosphate + H(+). Its function is as follows. Part of the ABC transporter complex MetNIQ involved in methionine import. Responsible for energy coupling to the transport system. The sequence is that of Methionine import ATP-binding protein MetN 1 from Burkholderia ambifaria (strain ATCC BAA-244 / DSM 16087 / CCUG 44356 / LMG 19182 / AMMD) (Burkholderia cepacia (strain AMMD)).